The following is an 888-amino-acid chain: Prodigiosin synthesizing transferase PigC (888 aa).

The protein belongs to the PigC family.

The protein operates within antibiotic biosynthesis; prodigiosin biosynthesis. Involved in the biosynthesis of 2-methyl-3-n-amyl-pyrrole (MAP), one of the terminal products involved in the biosynthesis of the red antibiotic prodigiosin (Pig). Catalyzes the transfer of 2-methyl-3-n-amyl-pyrrole (MAP) to 4-methoxy-2,2'-bipyrrole-5-carbaldehyde (MBC) to yield prodigiosin. It is able to use substrates with a variety of monocyclic rings in place of the pyrrolic ring A of its natural substrate. The protein is Prodigiosin synthesizing transferase PigC of Serratia marcescens.